Reading from the N-terminus, the 332-residue chain is Ketol-acid reductoisomerase (NADP(+)) (332 aa).

The 181-residue stretch at 3–183 folds into the KARI N-terminal Rossmann domain; sequence TEIFYDADAD…GGARAGVIKT (181 aa). Residues 26–29, Ser52, Ser54, and 84–87 each bind NADP(+); these read YGSQ and DTKQ. Residue His109 is part of the active site. Gly135 contributes to the NADP(+) binding site. In terms of domain architecture, KARI C-terminal knotted spans 184–329; the sequence is TFTEETETDL…KKLRSLMSWT (146 aa). Mg(2+)-binding residues include Asp192, Glu196, Glu228, and Glu232. Ser253 serves as a coordination point for substrate.

The protein belongs to the ketol-acid reductoisomerase family. Mg(2+) serves as cofactor.

It catalyses the reaction (2R)-2,3-dihydroxy-3-methylbutanoate + NADP(+) = (2S)-2-acetolactate + NADPH + H(+). The catalysed reaction is (2R,3R)-2,3-dihydroxy-3-methylpentanoate + NADP(+) = (S)-2-ethyl-2-hydroxy-3-oxobutanoate + NADPH + H(+). It functions in the pathway amino-acid biosynthesis; L-isoleucine biosynthesis; L-isoleucine from 2-oxobutanoate: step 2/4. It participates in amino-acid biosynthesis; L-valine biosynthesis; L-valine from pyruvate: step 2/4. Functionally, involved in the biosynthesis of branched-chain amino acids (BCAA). Catalyzes an alkyl-migration followed by a ketol-acid reduction of (S)-2-acetolactate (S2AL) to yield (R)-2,3-dihydroxy-isovalerate. In the isomerase reaction, S2AL is rearranged via a Mg-dependent methyl migration to produce 3-hydroxy-3-methyl-2-ketobutyrate (HMKB). In the reductase reaction, this 2-ketoacid undergoes a metal-dependent reduction by NADPH to yield (R)-2,3-dihydroxy-isovalerate. The chain is Ketol-acid reductoisomerase (NADP(+)) from Saccharopolyspora erythraea (strain ATCC 11635 / DSM 40517 / JCM 4748 / NBRC 13426 / NCIMB 8594 / NRRL 2338).